The following is a 159-amino-acid chain: S-ribosylhomocysteine lyase (159 aa).

Fe cation is bound by residues His-53, His-57, and Cys-124.

It belongs to the LuxS family. Homodimer. Fe cation is required as a cofactor.

The enzyme catalyses S-(5-deoxy-D-ribos-5-yl)-L-homocysteine = (S)-4,5-dihydroxypentane-2,3-dione + L-homocysteine. Its function is as follows. Involved in the synthesis of autoinducer 2 (AI-2) which is secreted by bacteria and is used to communicate both the cell density and the metabolic potential of the environment. The regulation of gene expression in response to changes in cell density is called quorum sensing. Catalyzes the transformation of S-ribosylhomocysteine (RHC) to homocysteine (HC) and 4,5-dihydroxy-2,3-pentadione (DPD). This Porphyromonas gingivalis (strain ATCC 33277 / DSM 20709 / CIP 103683 / JCM 12257 / NCTC 11834 / 2561) protein is S-ribosylhomocysteine lyase.